Reading from the N-terminus, the 295-residue chain is Bifunctional protein FolD (295 aa).

Residues 165–167 (GRG), S192, and I233 each bind NADP(+).

It belongs to the tetrahydrofolate dehydrogenase/cyclohydrolase family. Homodimer.

The enzyme catalyses (6R)-5,10-methylene-5,6,7,8-tetrahydrofolate + NADP(+) = (6R)-5,10-methenyltetrahydrofolate + NADPH. It catalyses the reaction (6R)-5,10-methenyltetrahydrofolate + H2O = (6R)-10-formyltetrahydrofolate + H(+). The protein operates within one-carbon metabolism; tetrahydrofolate interconversion. Its function is as follows. Catalyzes the oxidation of 5,10-methylenetetrahydrofolate to 5,10-methenyltetrahydrofolate and then the hydrolysis of 5,10-methenyltetrahydrofolate to 10-formyltetrahydrofolate. In Tropheryma whipplei (strain Twist) (Whipple's bacillus), this protein is Bifunctional protein FolD.